Reading from the N-terminus, the 349-residue chain is Phenylalanine--tRNA ligase alpha subunit (349 aa).

Residue Glu258 participates in Mg(2+) binding.

Belongs to the class-II aminoacyl-tRNA synthetase family. Phe-tRNA synthetase alpha subunit type 1 subfamily. In terms of assembly, tetramer of two alpha and two beta subunits. It depends on Mg(2+) as a cofactor.

It localises to the cytoplasm. The enzyme catalyses tRNA(Phe) + L-phenylalanine + ATP = L-phenylalanyl-tRNA(Phe) + AMP + diphosphate + H(+). The sequence is that of Phenylalanine--tRNA ligase alpha subunit from Rickettsia conorii (strain ATCC VR-613 / Malish 7).